The following is a 136-amino-acid chain: Small ribosomal subunit protein uS9 (136 aa).

Positions 115–136 (KVKERKKPGLRKARKARQFSKR) are disordered. Positions 117 to 136 (KERKKPGLRKARKARQFSKR) are enriched in basic residues.

This sequence belongs to the universal ribosomal protein uS9 family.

The polypeptide is Small ribosomal subunit protein uS9 (Mycoplasmopsis pulmonis (strain UAB CTIP) (Mycoplasma pulmonis)).